We begin with the raw amino-acid sequence, 641 residues long: 1-deoxy-D-xylulose-5-phosphate synthase (641 aa).

Thiamine diphosphate is bound by residues H80 and 121-123 (GHS). Position 152 (D152) interacts with Mg(2+). Thiamine diphosphate-binding positions include 153-154 (GS), N181, Y290, and E372. N181 provides a ligand contact to Mg(2+).

The protein belongs to the transketolase family. DXPS subfamily. As to quaternary structure, homodimer. The cofactor is Mg(2+). Thiamine diphosphate is required as a cofactor.

It carries out the reaction D-glyceraldehyde 3-phosphate + pyruvate + H(+) = 1-deoxy-D-xylulose 5-phosphate + CO2. The protein operates within metabolic intermediate biosynthesis; 1-deoxy-D-xylulose 5-phosphate biosynthesis; 1-deoxy-D-xylulose 5-phosphate from D-glyceraldehyde 3-phosphate and pyruvate: step 1/1. Its function is as follows. Catalyzes the acyloin condensation reaction between C atoms 2 and 3 of pyruvate and glyceraldehyde 3-phosphate to yield 1-deoxy-D-xylulose-5-phosphate (DXP). The chain is 1-deoxy-D-xylulose-5-phosphate synthase from Rhodobacter capsulatus (Rhodopseudomonas capsulata).